The following is a 273-amino-acid chain: Transposon Tn7 transposition protein TnsA (273 aa).

Active-site residues include Glu-63 and Glu-73. The segment at residues 90 to 108 is a DNA-binding region (H-T-H motif); that stretch reads TRQIAIDSGIKHPVIRGVD. Residue Asp-114 is part of the active site. Residues Asp-114, Gln-130, and Val-131 each coordinate Mg(2+). Lys-132 is an active-site residue.

In terms of assembly, heteromer with TnsB. Interacts with TnsC (via C-terminus); this interaction allows TnsA to bind donor DNA. Mg(2+) is required as a cofactor. Mn(2+) serves as cofactor.

Functionally, required for Tn7 transposition. Forms the transposase, together with TnsB. TnsA executes the 5'-DNA strand breakage reaction. TnsABC and TnsD promote high-frequency insertion of Tn7 into a specific target site known as att-Tn7 whereas TnsABC and TnsE promote low-frequency insertion into many different sites. The chain is Transposon Tn7 transposition protein TnsA from Escherichia coli.